We begin with the raw amino-acid sequence, 560 residues long: NAD-dependent malic enzyme (560 aa).

Tyr-100 serves as the catalytic Proton donor. Residue Arg-153 coordinates NAD(+). Lys-171 acts as the Proton acceptor in catalysis. The a divalent metal cation site is built by Glu-242, Asp-243, and Asp-266. Residues Asp-266 and Asn-413 each contribute to the NAD(+) site.

Belongs to the malic enzymes family. As to quaternary structure, homotetramer. Mg(2+) is required as a cofactor. Mn(2+) serves as cofactor.

The catalysed reaction is (S)-malate + NAD(+) = pyruvate + CO2 + NADH. It carries out the reaction oxaloacetate + H(+) = pyruvate + CO2. This Psychrobacter cryohalolentis (strain ATCC BAA-1226 / DSM 17306 / VKM B-2378 / K5) protein is NAD-dependent malic enzyme.